The sequence spans 241 residues: 3-oxoacyl-[acyl-carrier-protein] reductase FabG (241 aa).

NADP(+)-binding positions include 13–16 (GASG), S38, 57–58 (KV), and N83. S135 contacts substrate. Y148 functions as the Proton acceptor in the catalytic mechanism. Residues 148–152 (YCASK) and I181 each bind NADP(+).

Belongs to the short-chain dehydrogenases/reductases (SDR) family. In terms of assembly, homotetramer.

The catalysed reaction is a (3R)-hydroxyacyl-[ACP] + NADP(+) = a 3-oxoacyl-[ACP] + NADPH + H(+). Its pathway is lipid metabolism; fatty acid biosynthesis. Functionally, catalyzes the NADPH-dependent reduction of beta-ketoacyl-ACP substrates to beta-hydroxyacyl-ACP products, the first reductive step in the elongation cycle of fatty acid biosynthesis. The polypeptide is 3-oxoacyl-[acyl-carrier-protein] reductase FabG (fabG) (Rickettsia bellii (strain RML369-C)).